The following is a 245-amino-acid chain: MTSSSSFSRFDGRAQDQMRAVKITRGFTSNPAGSVLVEFGNTRVMCTASVELGVPRFKRDSGEGWLTAEYAMLPAATAERNRRESMAGKVKGRTHEISRLIGRSLRAAVDLSQLGENTIAIDCDVLQADGGTRTASITGAYVALADAIKVLQERGVVPGSPLLAPVAAVSVGLVDGNVCLDLPYEEDSRADVDLNVVMTEHGEFVEIQGTGEETTFTRAQLNDMLDHAEKGCRELVAAQKAALGI.

Residues R93 and 131–133 contribute to the phosphate site; that span reads GTR.

This sequence belongs to the RNase PH family. In terms of assembly, homohexameric ring arranged as a trimer of dimers.

The enzyme catalyses tRNA(n+1) + phosphate = tRNA(n) + a ribonucleoside 5'-diphosphate. Its function is as follows. Phosphorolytic 3'-5' exoribonuclease that plays an important role in tRNA 3'-end maturation. Removes nucleotide residues following the 3'-CCA terminus of tRNAs; can also add nucleotides to the ends of RNA molecules by using nucleoside diphosphates as substrates, but this may not be physiologically important. Probably plays a role in initiation of 16S rRNA degradation (leading to ribosome degradation) during starvation. This chain is Ribonuclease PH, found in Corynebacterium glutamicum (strain ATCC 13032 / DSM 20300 / JCM 1318 / BCRC 11384 / CCUG 27702 / LMG 3730 / NBRC 12168 / NCIMB 10025 / NRRL B-2784 / 534).